A 660-amino-acid polypeptide reads, in one-letter code: Bifunctional polymyxin resistance protein ArnA (660 aa).

The segment at 1–304 is formyltransferase ArnAFT; it reads MKTVVFAYHD…TLGLVQGSRL (304 aa). 86 to 88 is a binding site for (6R)-10-formyltetrahydrofolate; the sequence is HLI. The Proton donor; for formyltransferase activity role is filled by His-104. (6R)-10-formyltetrahydrofolate is bound by residues Arg-114 and 136–140; that span reads VKRAD. Residues 314–660 form a dehydrogenase ArnADH region; sequence RRTRVLILGV…RTVDLTDKPS (347 aa). Residues Asp-347 and 368 to 369 contribute to the NAD(+) site; that span reads DI. UDP-alpha-D-glucuronate-binding positions include Ala-393, Tyr-398, and 432-433; that span reads TS. The active-site Proton acceptor; for decarboxylase activity is Glu-434. UDP-alpha-D-glucuronate-binding positions include Arg-460, Asn-492, 526-535, and Tyr-613; that span reads KLIDGGKQKR. Arg-619 functions as the Proton donor; for decarboxylase activity in the catalytic mechanism.

In the N-terminal section; belongs to the Fmt family. UDP-L-Ara4N formyltransferase subfamily. This sequence in the C-terminal section; belongs to the NAD(P)-dependent epimerase/dehydratase family. UDP-glucuronic acid decarboxylase subfamily. In terms of assembly, homohexamer, formed by a dimer of trimers.

It carries out the reaction UDP-alpha-D-glucuronate + NAD(+) = UDP-beta-L-threo-pentopyranos-4-ulose + CO2 + NADH. The enzyme catalyses UDP-4-amino-4-deoxy-beta-L-arabinose + (6R)-10-formyltetrahydrofolate = UDP-4-deoxy-4-formamido-beta-L-arabinose + (6S)-5,6,7,8-tetrahydrofolate + H(+). Its pathway is nucleotide-sugar biosynthesis; UDP-4-deoxy-4-formamido-beta-L-arabinose biosynthesis; UDP-4-deoxy-4-formamido-beta-L-arabinose from UDP-alpha-D-glucuronate: step 1/3. It functions in the pathway nucleotide-sugar biosynthesis; UDP-4-deoxy-4-formamido-beta-L-arabinose biosynthesis; UDP-4-deoxy-4-formamido-beta-L-arabinose from UDP-alpha-D-glucuronate: step 3/3. The protein operates within bacterial outer membrane biogenesis; lipopolysaccharide biosynthesis. In terms of biological role, bifunctional enzyme that catalyzes the oxidative decarboxylation of UDP-glucuronic acid (UDP-GlcUA) to UDP-4-keto-arabinose (UDP-Ara4O) and the addition of a formyl group to UDP-4-amino-4-deoxy-L-arabinose (UDP-L-Ara4N) to form UDP-L-4-formamido-arabinose (UDP-L-Ara4FN). The modified arabinose is attached to lipid A and is required for resistance to polymyxin and cationic antimicrobial peptides. This is Bifunctional polymyxin resistance protein ArnA from Escherichia coli O9:H4 (strain HS).